Reading from the N-terminus, the 206-residue chain is Enterobactin synthase component D (206 aa).

3 residues coordinate Mg(2+): Asp-107, Glu-109, and Glu-152.

This sequence belongs to the P-Pant transferase superfamily. EntD family. As to quaternary structure, entB, EntD, EntE, and EntF form a multienzyme complex called enterobactin synthase. Mg(2+) is required as a cofactor.

Its subcellular location is the membrane. It catalyses the reaction apo-[aryl-carrier protein] + CoA = holo-[aryl-carrier protein] + adenosine 3',5'-bisphosphate + H(+). It carries out the reaction apo-[peptidyl-carrier protein] + CoA = holo-[peptidyl-carrier protein] + adenosine 3',5'-bisphosphate + H(+). The protein operates within siderophore biosynthesis; enterobactin biosynthesis. Its function is as follows. Involved in the biosynthesis of the siderophore enterobactin (enterochelin), which is a macrocyclic trimeric lactone of N-(2,3-dihydroxybenzoyl)-serine. The serine trilactone serves as a scaffolding for the three catechol functionalities that provide hexadentate coordination for the tightly ligated iron(2+) atoms. Plays an essential role in the assembly of the enterobactin by catalyzing the transfer of the 4'-phosphopantetheine (Ppant) moiety from coenzyme A to the apo-domains of both EntB (ArCP domain) and EntF (PCP domain) to yield their holo-forms which make them competent for the activation of 2,3-dihydroxybenzoate (DHB) and L-serine, respectively. The sequence is that of Enterobactin synthase component D from Escherichia coli (strain K12).